The following is a 363-amino-acid chain: Protein-glutamate methylesterase/protein-glutamine glutaminase 2 (363 aa).

Residues 7-124 (RVLVVDDSAL…SLTLENVADE (118 aa)) form the Response regulatory domain. The residue at position 58 (D58) is a 4-aspartylphosphate. Residues 160 to 357 (PVASRTTPSK…NLLMVQSAAQ (198 aa)) form the CheB-type methylesterase domain. Catalysis depends on residues S176, H203, and D299.

The protein belongs to the CheB family. In terms of processing, phosphorylated by CheA. Phosphorylation of the N-terminal regulatory domain activates the methylesterase activity.

The protein resides in the cytoplasm. It carries out the reaction [protein]-L-glutamate 5-O-methyl ester + H2O = L-glutamyl-[protein] + methanol + H(+). It catalyses the reaction L-glutaminyl-[protein] + H2O = L-glutamyl-[protein] + NH4(+). Involved in chemotaxis. Part of a chemotaxis signal transduction system that modulates chemotaxis in response to various stimuli. Catalyzes the demethylation of specific methylglutamate residues introduced into the chemoreceptors (methyl-accepting chemotaxis proteins or MCP) by CheR. Also mediates the irreversible deamidation of specific glutamine residues to glutamic acid. This is Protein-glutamate methylesterase/protein-glutamine glutaminase 2 from Koribacter versatilis (strain Ellin345).